Here is a 244-residue protein sequence, read N- to C-terminus: 1-(5-phosphoribosyl)-5-[(5-phosphoribosylamino)methylideneamino] imidazole-4-carboxamide isomerase (244 aa).

D8 serves as the catalytic Proton acceptor. Residue D130 is the Proton donor of the active site.

Belongs to the HisA/HisF family.

The protein localises to the cytoplasm. It carries out the reaction 1-(5-phospho-beta-D-ribosyl)-5-[(5-phospho-beta-D-ribosylamino)methylideneamino]imidazole-4-carboxamide = 5-[(5-phospho-1-deoxy-D-ribulos-1-ylimino)methylamino]-1-(5-phospho-beta-D-ribosyl)imidazole-4-carboxamide. The protein operates within amino-acid biosynthesis; L-histidine biosynthesis; L-histidine from 5-phospho-alpha-D-ribose 1-diphosphate: step 4/9. The sequence is that of 1-(5-phosphoribosyl)-5-[(5-phosphoribosylamino)methylideneamino] imidazole-4-carboxamide isomerase from Hahella chejuensis (strain KCTC 2396).